The primary structure comprises 1025 residues: Beta-galactosidase (1025 aa).

Glutamate 482 (proton donor) is an active-site residue. Residue glutamate 551 is the Nucleophile of the active site.

Belongs to the glycosyl hydrolase 2 family.

The enzyme catalyses Hydrolysis of terminal non-reducing beta-D-galactose residues in beta-D-galactosides.. The chain is Beta-galactosidase (LAC4) from Kluyveromyces lactis (strain ATCC 8585 / CBS 2359 / DSM 70799 / NBRC 1267 / NRRL Y-1140 / WM37) (Yeast).